Consider the following 427-residue polypeptide: Nucleolar and spindle-associated protein 1 (427 aa).

The segment at 41–190 is disordered; that stretch reads AHLNPETRKE…LGNNKRTSAT (150 aa). Residues 43–55 are compositionally biased toward basic and acidic residues; the sequence is LNPETRKENKNQD. Over residues 83–96 the composition is skewed to basic residues; sequence TKTRRRRRKKHKTI. Low complexity predominate over residues 119–128; the sequence is NFQNQENQEN. S139 carries the post-translational modification Phosphoserine. Positions 159–179 are enriched in basic and acidic residues; the sequence is NDIKDSKKPLEKRSLCTDEFS. Positions 181 to 190 are enriched in polar residues; the sequence is LGNNKRTSAT. T191 carries the post-translational modification Phosphothreonine. Residues 235–312 form a disordered region; sequence IVTPVPPRGR…QAVFRTPKSK (78 aa). The tract at residues 243–367 is interaction with microtubules; sequence GRLSVPCTPA…HKGKLKPWGQ (125 aa). S246 is subject to Phosphoserine. A Phosphothreonine modification is found at T250. Residues 252–264 are compositionally biased toward polar residues; it reads ARQQCPQGHSATK. S261 bears the Phosphoserine mark. Phosphothreonine is present on residues T323 and T334. Residues S337 and S348 each carry the phosphoserine modification. The interval 354-427 is disordered; sequence NYKPHKGKLK…RRNLGVTKAQ (74 aa). A KEN box motif is present at residues 369 to 375; sequence KENNSLN. Residues 393-425 are a coiled coil; it reads LQTREERWKRQEQERKEKKEKLLEARRNLGVTK. The segment covering 394–419 has biased composition (basic and acidic residues); sequence QTREERWKRQEQERKEKKEKLLEARR.

It belongs to the NUSAP family. Interacts with DNA and microtubules. Microtubule bundling is inhibited by IPO7, KPNA2 and KPNB1 while association with DNA is also inhibited by IPO7 and KPNA2. Ubiquitinated. Ubiquitination by FZR1 may lead to proteasome-dependent degradation of this protein.

The protein resides in the cytoplasm. It is found in the nucleus. The protein localises to the nucleolus. It localises to the cytoskeleton. Its subcellular location is the spindle. The protein resides in the chromosome. Microtubule-associated protein with the capacity to bundle and stabilize microtubules. May associate with chromosomes and promote the organization of mitotic spindle microtubules around them. This Mus musculus (Mouse) protein is Nucleolar and spindle-associated protein 1 (Nusap1).